The primary structure comprises 209 residues: tRNA (guanine-N(7)-)-methyltransferase (209 aa).

Residues Asp-35, Glu-60, Asn-87, and Asp-113 each coordinate S-adenosyl-L-methionine. Asp-113 is a catalytic residue. 2 residues coordinate substrate: Lys-117 and Asp-149.

It belongs to the class I-like SAM-binding methyltransferase superfamily. TrmB family.

The enzyme catalyses guanosine(46) in tRNA + S-adenosyl-L-methionine = N(7)-methylguanosine(46) in tRNA + S-adenosyl-L-homocysteine. It participates in tRNA modification; N(7)-methylguanine-tRNA biosynthesis. Its function is as follows. Catalyzes the formation of N(7)-methylguanine at position 46 (m7G46) in tRNA. The chain is tRNA (guanine-N(7)-)-methyltransferase from Prochlorococcus marinus (strain MIT 9215).